The chain runs to 88 residues: Class I hydrophobin F (88 aa).

Residues 1 to 21 (MLSRLFTVPAILLATLGSAAT) form the signal peptide. 4 disulfides stabilise this stretch: C30–C67, C34–C58, C35–C51, and C68–C84.

It belongs to the fungal hydrophobin family.

It localises to the secreted. It is found in the cell wall. The protein localises to the vacuole. The protein resides in the cytoplasmic vesicle. Aerial growth, conidiation, and dispersal of filamentous fungi in the environment rely upon a capability of their secreting small amphipathic proteins called hydrophobins (HPBs) with low sequence identity. Class I can self-assemble into an outermost layer of rodlet bundles on aerial cell surfaces, conferring cellular hydrophobicity that supports fungal growth, development and dispersal; whereas Class II form highly ordered films at water-air interfaces through intermolecular interactions but contribute nothing to the rodlet structure. Hyd1F contributes to certain cell wall-related features, such as hydrophobicity but is not involved in cell wall-related events during fungal proliferation in host hemocoel. Does not contribute to conidial hydrophobicity. The protein is Class I hydrophobin F of Beauveria bassiana (strain ARSEF 2860) (White muscardine disease fungus).